A 355-amino-acid polypeptide reads, in one-letter code: 3-dehydroquinate synthase (355 aa).

NAD(+) is bound by residues 106–110 (GVVGD), 130–131 (TS), Lys143, and Lys152. Zn(2+) contacts are provided by Glu185, His246, and His262.

This sequence belongs to the sugar phosphate cyclases superfamily. Dehydroquinate synthase family. Co(2+) is required as a cofactor. Zn(2+) serves as cofactor. The cofactor is NAD(+).

The protein resides in the cytoplasm. It carries out the reaction 7-phospho-2-dehydro-3-deoxy-D-arabino-heptonate = 3-dehydroquinate + phosphate. The protein operates within metabolic intermediate biosynthesis; chorismate biosynthesis; chorismate from D-erythrose 4-phosphate and phosphoenolpyruvate: step 2/7. Catalyzes the conversion of 3-deoxy-D-arabino-heptulosonate 7-phosphate (DAHP) to dehydroquinate (DHQ). The polypeptide is 3-dehydroquinate synthase (Latilactobacillus sakei subsp. sakei (strain 23K) (Lactobacillus sakei subsp. sakei)).